The sequence spans 96 residues: Transcription and mRNA export factor SUS1 (96 aa).

Residue Lys-68 forms a Glycyl lysine isopeptide (Lys-Gly) (interchain with G-Cter in ubiquitin) linkage.

It belongs to the ENY2 family. As to quaternary structure, component of the nuclear pore complex (NPC)-associated TREX-2 complex (transcription and export complex 2), composed of at least SUS1, SAC3, THP1, SEM1, and CDC31. TREX-2 contains 2 SUS1 chains. The TREX-2 complex interacts with the nucleoporin NUP1. Component of the 1.8 MDa SAGA transcription coactivator-HAT complex. SAGA is built of 5 distinct domains with specialized functions. Within the SAGA complex, SUS1, SGF11, SGF73 and UBP8 form an additional subcomplex of SAGA called the DUB module (deubiquitination module). Interacts directly with THP1, SAC3, SGF11, and with the RNA polymerase II.

The protein resides in the nucleus. It localises to the nucleoplasm. Its subcellular location is the cytoplasm. The protein localises to the P-body. Involved in mRNA export coupled transcription activation by association with both the TREX-2 and the SAGA complexes. At the promoters, SAGA is required for recruitment of the basal transcription machinery. It influences RNA polymerase II transcriptional activity through different activities such as TBP interaction and promoter selectivity, interaction with transcription activators, and chromatin modification through histone acetylation and deubiquitination. Within the SAGA complex, participates in a subcomplex required for deubiquitination of H2B and for the maintenance of steady-state H3 methylation levels. The TREX-2 complex functions in docking export-competent ribonucleoprotein particles (mRNPs) to the nuclear entrance of the nuclear pore complex (nuclear basket). TREX-2 participates in mRNA export and accurate chromatin positioning in the nucleus by tethering genes to the nuclear periphery. May also be involved in cytoplasmic mRNA decay by interaction with components of P-bodies. This is Transcription and mRNA export factor SUS1 from Saccharomyces cerevisiae (strain RM11-1a) (Baker's yeast).